Reading from the N-terminus, the 260-residue chain is Acetylglutamate kinase (260 aa).

Residues 41 to 42 (GG), arginine 63, and asparagine 157 each bind substrate.

It belongs to the acetylglutamate kinase family. ArgB subfamily.

It localises to the cytoplasm. It carries out the reaction N-acetyl-L-glutamate + ATP = N-acetyl-L-glutamyl 5-phosphate + ADP. Its pathway is amino-acid biosynthesis; L-arginine biosynthesis; N(2)-acetyl-L-ornithine from L-glutamate: step 2/4. Its function is as follows. Catalyzes the ATP-dependent phosphorylation of N-acetyl-L-glutamate. This chain is Acetylglutamate kinase, found in Acidobacterium capsulatum (strain ATCC 51196 / DSM 11244 / BCRC 80197 / JCM 7670 / NBRC 15755 / NCIMB 13165 / 161).